We begin with the raw amino-acid sequence, 33 residues long: Putative tumor antigen NA88-A (33 aa).

As to expression, expressed in testis and melanoma cell lines.

This is Putative tumor antigen NA88-A (VENTXP1) from Homo sapiens (Human).